Here is a 462-residue protein sequence, read N- to C-terminus: tRNA(Ile2) 2-agmatinylcytidine synthetase TiaS (462 aa).

This sequence belongs to the TiaS family.

The protein resides in the cytoplasm. The catalysed reaction is cytidine(34) in tRNA(Ile2) + agmatine + ATP + H2O = 2-agmatinylcytidine(34) in tRNA(Ile2) + AMP + 2 phosphate + 2 H(+). ATP-dependent agmatine transferase that catalyzes the formation of 2-agmatinylcytidine (agm2C) at the wobble position (C34) of tRNA(Ile2), converting the codon specificity from AUG to AUA. This chain is tRNA(Ile2) 2-agmatinylcytidine synthetase TiaS, found in Haloquadratum walsbyi (strain DSM 16790 / HBSQ001).